Consider the following 236-residue polypeptide: uncharacterized protein (236 aa).

Its subcellular location is the plastid. It is found in the chloroplast. This is an uncharacterized protein from Chlorella vulgaris (Green alga).